A 315-amino-acid chain; its full sequence is Uracil-DNA glycosylase (315 aa).

Low complexity predominate over residues 35–80 (AAAAAPAGAGAGASKPARPPAAARPAKGTPAASAATTATGADASAP). Residues 35-88 (AAAAAPAGAGAGASKPARPPAAARPAKGTPAASAATTATGADASAPAPDPGAPT) form a disordered region. The active-site Proton acceptor is the Asp158.

This sequence belongs to the uracil-DNA glycosylase (UDG) superfamily. UNG family.

The protein localises to the host nucleus. It catalyses the reaction Hydrolyzes single-stranded DNA or mismatched double-stranded DNA and polynucleotides, releasing free uracil.. Its function is as follows. Excises uracil residues from the DNA which can arise as a result of misincorporation of dUMP residues by DNA polymerase or deamination of cytosines. Therefore may reduce deleterious uracil incorporation into the viral genome, particularly in terminally differentiated cells which lack DNA repair enzymes. The protein is Uracil-DNA glycosylase (UL2) of Suid herpesvirus 1 (strain Indiana-Funkhauser / Becker) (SuHV-1).